Reading from the N-terminus, the 379-residue chain is UDP-N-acetylglucosamine--N-acetylmuramyl-(pentapeptide) pyrophosphoryl-undecaprenol N-acetylglucosamine transferase (379 aa).

Residues 17–19, Asn128, Arg169, Ser197, and Gln298 contribute to the UDP-N-acetyl-alpha-D-glucosamine site; that span reads TGG.

The protein belongs to the glycosyltransferase 28 family. MurG subfamily.

The protein resides in the cell inner membrane. It catalyses the reaction di-trans,octa-cis-undecaprenyl diphospho-N-acetyl-alpha-D-muramoyl-L-alanyl-D-glutamyl-meso-2,6-diaminopimeloyl-D-alanyl-D-alanine + UDP-N-acetyl-alpha-D-glucosamine = di-trans,octa-cis-undecaprenyl diphospho-[N-acetyl-alpha-D-glucosaminyl-(1-&gt;4)]-N-acetyl-alpha-D-muramoyl-L-alanyl-D-glutamyl-meso-2,6-diaminopimeloyl-D-alanyl-D-alanine + UDP + H(+). It participates in cell wall biogenesis; peptidoglycan biosynthesis. Its function is as follows. Cell wall formation. Catalyzes the transfer of a GlcNAc subunit on undecaprenyl-pyrophosphoryl-MurNAc-pentapeptide (lipid intermediate I) to form undecaprenyl-pyrophosphoryl-MurNAc-(pentapeptide)GlcNAc (lipid intermediate II). This chain is UDP-N-acetylglucosamine--N-acetylmuramyl-(pentapeptide) pyrophosphoryl-undecaprenol N-acetylglucosamine transferase, found in Brucella suis (strain ATCC 23445 / NCTC 10510).